The primary structure comprises 482 residues: Anthocyanin 3'-O-beta-glucosyltransferase (482 aa).

Histidine 16 functions as the Proton acceptor in the catalytic mechanism. Histidine 16 serves as a coordination point for an anthocyanidin. Aspartate 119 serves as the catalytic Charge relay. Positions 349, 351, 366, 369, 370, 371, and 374 each coordinate UDP-alpha-D-glucose. An anthocyanidin is bound at residue alanine 389. UDP-alpha-D-glucose is bound by residues glutamate 390 and glutamine 391.

It belongs to the UDP-glycosyltransferase family. In terms of processing, the N-terminus is blocked. As to expression, abundant in petals and barely detected in leaves.

It catalyses the reaction delphinidin 3,5-bis-O-beta-D-glucoside + UDP-alpha-D-glucose = delphinidin 3,3',5-tri-O-beta-D-glucoside + UDP + H(+). In terms of biological role, specifically glucosylates the 3'-hydroxy group of delphinidin 3,5-di-O-glucoside to produce gentiodelphin. Shows a strict specificity for UDP-glucose as donor. In Gentiana triflora (Clustered gentian), this protein is Anthocyanin 3'-O-beta-glucosyltransferase.